The sequence spans 446 residues: MKLPLLRPLWPMLSPAAGSPDSPPEPSKPSLPAAWLLLHALFCATSMAVGFRFSRLIVYLLFLPTPINPTAHLVSLVSPPVMLAAANATTTITTTTTTTTTTVTTTTVAAEVGAHPQHHHHGPVFVGRHPIRVRPWPHPDPNELLKAHHILAAVQNAQRSSRRRGAGPPRPVIAVTPTTTSALQVPSLTSMAHTLRLVDGPLTWIVVEPEHHTDAVAAVLSRSNLNFLHITGPDSSTSRLRMHALREIRKRKMDGVVVFADENSILRTELFDEAQKVKSVGAVPVGVLGEDEGTSETFLQAPSCDAEGKLVGYHVSEETMLPANRGDMLLSSRLEWAGFVVNAQALWEGGGAASRPEWVSDIDAIDDGAAASPLSLVTDAARVEPLASCGQAALAWSHRSDALHEVKFPHEWKIDPPLVTIASRQQDAKPETPLKRTTLLNTEGQH.

Over 1 to 30 the chain is Cytoplasmic; it reads MKLPLLRPLWPMLSPAAGSPDSPPEPSKPS. The helical; Signal-anchor for type II membrane protein transmembrane segment at 31 to 51 threads the bilayer; that stretch reads LPAAWLLLHALFCATSMAVGF. At 52–446 the chain is on the lumenal side; that stretch reads RFSRLIVYLL…TTLLNTEGQH (395 aa). Residue Asn-87 is glycosylated (N-linked (GlcNAc...) asparagine). Residues 425-446 form a disordered region; sequence QQDAKPETPLKRTTLLNTEGQH.

It belongs to the glycosyltransferase 43 family.

The protein resides in the golgi apparatus membrane. In terms of biological role, involved in the synthesis of glucuronoxylan hemicellulose in secondary cell walls. The chain is Probable glucuronosyltransferase Os04g0650300 from Oryza sativa subsp. japonica (Rice).